We begin with the raw amino-acid sequence, 345 residues long: Selenide, water dikinase (345 aa).

Cysteine 16 is a catalytic residue. Residues lysine 19 and 46–48 contribute to the ATP site; that span reads TSD. Aspartate 49 contributes to the Mg(2+) binding site. ATP-binding positions include aspartate 66, aspartate 89, and 136-138; that span reads GHT. Aspartate 89 lines the Mg(2+) pocket. Aspartate 224 contributes to the Mg(2+) binding site.

The protein belongs to the selenophosphate synthase 1 family. Class I subfamily. Homodimer. It depends on Mg(2+) as a cofactor.

It carries out the reaction hydrogenselenide + ATP + H2O = selenophosphate + AMP + phosphate + 2 H(+). Its function is as follows. Synthesizes selenophosphate from selenide and ATP. The chain is Selenide, water dikinase from Clostridium botulinum (strain Alaska E43 / Type E3).